A 1248-amino-acid polypeptide reads, in one-letter code: Probable serine/threonine-protein kinase DDB_G0278509 (1248 aa).

Disordered regions lie at residues 1–26 (MSKVIGYIDYGDPDGNEEPSKQNGEY), 40–61 (SVNGGYDKDNNNHHHHNQEEDY), 100–125 (QSYKLSNSGESMNRSINQSKEEDHLE), 180–220 (QNNN…TKNN), and 235–338 (SIDS…NNNK). The segment covering 102-117 (YKLSNSGESMNRSINQ) has biased composition (polar residues). Residues 181-216 (NNNNNNSNSNSNSNSNSNNNNNNNNNNNNNNNNNNN) show a composition bias toward low complexity. LRR repeat units follow at residues 386–407 (SSTELDLSEQELNEFPIFDEKE), 411–432 (GYKIIDLSFNNIKSIPLDAFTN), 435–457 (NLEQLIMFNNNLSDVPSSIEFLK), 458–480 (HLTILDLSHNNLHEICRELGNLS), 481–502 (FLRELYLSNNSLKKFPTTGNLY), 503–524 (NLKKLILDNNQITTIPIECVEP), 527–548 (QLQTLDLSFNKIGTITSSTTTT), 572–593 (NLKQLNLSHNELQEIPSSLRHL), 595–616 (KLHSLSIDYNQISVLPDKVVAS), 619–641 (RLAKLTISNNKIKQLPFAINNLS), 642–663 (SLIELNASNNVIELLPDSICYL), 665–687 (NLKKLNLNNNNLKELPSNIGFLT), and 688–708 (KLVDLQLYNNQISSLPISFLK). The disordered stretch occupies residues 825–873 (YPFQKLDPIPQSLYSSSNPRSHTESDIQKLKNNDETITTTNSSISTTSS). Residues 845-858 (SHTESDIQKLKNND) show a composition bias toward basic and acidic residues. Residues 860-873 (TITTTNSSISTTSS) show a composition bias toward low complexity. Residues 946 to 1239 (IQFFNLIGQG…SIYHRLENLM (294 aa)) enclose the Protein kinase domain. Residues 952 to 960 (IGQGGFSKV) and Lys-973 contribute to the ATP site. The active-site Proton acceptor is the Asp-1069. Positions 1106-1135 (NNTNNTATSSTTTSSANGANSISNNNNNGT) are disordered.

Belongs to the protein kinase superfamily. TKL Ser/Thr protein kinase family.

The catalysed reaction is L-seryl-[protein] + ATP = O-phospho-L-seryl-[protein] + ADP + H(+). The enzyme catalyses L-threonyl-[protein] + ATP = O-phospho-L-threonyl-[protein] + ADP + H(+). The polypeptide is Probable serine/threonine-protein kinase DDB_G0278509 (Dictyostelium discoideum (Social amoeba)).